Reading from the N-terminus, the 507-residue chain is Monoogygenase CPUR_05431 (507 aa).

This sequence belongs to the PheA/TfdB FAD monooxygenase family. FAD is required as a cofactor.

Its pathway is pigment biosynthesis. Monoogygenase; part of the ergochrome gene cluster responsible for the typical purple-black color of the ergot sclerotia. The ergochrome gene cluster produces several ergot pigments including the yellow ergochrome secalonic acid and its derivatives, as well as the red anthraquinones endocrocin and clavorubin. The pathway begins with the synthesis of atrochrysone thioester by the polyketide synthase (PKS) CPUR_05437. The atrochrysone carboxyl ACP thioesterase CPUR_05436 then breaks the thioester bond and releases the atrochrysone carboxylic acid from CPUR_05437. The atrochrysone carboxylic acid is then converted to atrochrysone which is further transformed into emodin anthrone. The next step is performed by the anthrone oxygenase CPUR_05434 that catalyzes the oxidation of emodinanthrone to emodin. Emodin is further modified to yield monodictyphenone via several steps involving CPUR_05427, CPUR_05428, CPUR_05429 and CPUR_05430. The short chain dehydrogenase/reductase CPUR_05418 then catalyzes the C-5 ketoreduction to give the xanthone skeleton of the monomeric units. Ergochromes formation requires further dimerization steps of different xanthone units, probably catalyzed by the cytochrome P450 monooxygenase CPUR_05419. CPUR_05425, CPUR_05426 and CPUR_05431 are unique to Claviceps, thus it is likely that they are involved in further modification of xanthone units or in their dimerization. The yellow ergochromes and the red anthraquinone pigments endocrocin and clavorubin are products from the same PKS derived precursors and the latter are likely shunt products in the pathway of xanthone biosynthesis. It is proposed that atrochrysone carboxylic acid released from the PKS CPUR_05437 can also be converted to endocrocin anthrone which is further oxidized into endocrocin by CPUR_05435. Endocrocin could be then modified to clavorubin, possibly by CPUR_05423 and CPUR_05431. Clavorubin is the principal anthraquinone metabolite produced by the cluster with a much higher yield compared to endocrocin. The protein is Monoogygenase CPUR_05431 of Claviceps purpurea (strain 20.1) (Ergot fungus).